A 332-amino-acid chain; its full sequence is Anthranilate phosphoribosyltransferase (332 aa).

5-phospho-alpha-D-ribose 1-diphosphate-binding positions include G79, 82–83 (GD), S87, 89–92 (NIST), 107–115 (KHGNRSVSS), and S119. An anthranilate-binding site is contributed by G79. Mg(2+) is bound at residue S91. N110 lines the anthranilate pocket. Anthranilate is bound at residue R165. Residues D223 and E224 each contribute to the Mg(2+) site.

Belongs to the anthranilate phosphoribosyltransferase family. In terms of assembly, homodimer. It depends on Mg(2+) as a cofactor.

It catalyses the reaction N-(5-phospho-beta-D-ribosyl)anthranilate + diphosphate = 5-phospho-alpha-D-ribose 1-diphosphate + anthranilate. It functions in the pathway amino-acid biosynthesis; L-tryptophan biosynthesis; L-tryptophan from chorismate: step 2/5. Its function is as follows. Catalyzes the transfer of the phosphoribosyl group of 5-phosphorylribose-1-pyrophosphate (PRPP) to anthranilate to yield N-(5'-phosphoribosyl)-anthranilate (PRA). The chain is Anthranilate phosphoribosyltransferase from Yersinia pseudotuberculosis serotype O:3 (strain YPIII).